Consider the following 467-residue polypeptide: MAVEKTMDKIVALCKNRGFIFPGSEIYGGLANSWDYGPLGVEFKNNVKRAWWKKFVQESKYNVGLDSAILMNREVWVASGHVGGFSDPLMDCKECKARFRADKLVEDHMTANGAEVATADGWSNEELMDYITKNNIVCPKCGKLNYTDIRKFNLMFKTFQGITEDSKNEVYLRPETAQGIFVNFKSVQRTTRKKVPFGIAQIGKSFRNEITPGNFTFRTREFEQMELEFFCKPGTDLEWFNFWKDSCWNFLLNLGMKEENIRMRDHGEEELSFYSNATSDIEYLFPFGWGELWGIADRTDYDLNKHAEHSGQDMTYLDPTTNEKYVPYVIEPSLGADRVALAFLVEAYDEEELEGANGKVDVRTVMHLHPALAPFKAAILPLSKKLSEKADEVYAELSKHFNVDYDETGSIGKRYRRQDEIGTPFCITVDFDTLEDGCVTVRDRDNMEQQRVKIEDVRAIIEKSLEF.

Substrate is bound by residues Arg-100 and Glu-175. ATP-binding positions include 207–209, 217–222, 291–292, and 335–338; these read RNE, FRTREF, EL, and GADR. 222–226 provides a ligand contact to substrate; it reads FEQME. 331–335 is a binding site for substrate; it reads EPSLG.

It belongs to the class-II aminoacyl-tRNA synthetase family. In terms of assembly, homodimer.

It is found in the cytoplasm. It carries out the reaction tRNA(Gly) + glycine + ATP = glycyl-tRNA(Gly) + AMP + diphosphate. Its function is as follows. Catalyzes the attachment of glycine to tRNA(Gly). In Clostridium perfringens (strain 13 / Type A), this protein is Glycine--tRNA ligase.